Here is a 2293-residue protein sequence, read N- to C-terminus: Protein Ycf2 (2293 aa).

1642–1649 (GSIGTGRS) contributes to the ATP binding site.

The protein belongs to the Ycf2 family.

The protein resides in the plastid. Its subcellular location is the chloroplast stroma. In terms of biological role, probable ATPase of unknown function. Its presence in a non-photosynthetic plant (Epifagus virginiana) and experiments in tobacco indicate that it has an essential function which is probably not related to photosynthesis. This Platanus occidentalis (Sycamore) protein is Protein Ycf2.